Reading from the N-terminus, the 495-residue chain is Probable cytosol aminopeptidase (495 aa).

The Mn(2+) site is built by Lys267 and Asp272. The active site involves Lys279. The Mn(2+) site is built by Asp290, Asp349, and Glu351. Residue Arg353 is part of the active site.

Belongs to the peptidase M17 family. Requires Mn(2+) as cofactor.

The protein resides in the cytoplasm. The catalysed reaction is Release of an N-terminal amino acid, Xaa-|-Yaa-, in which Xaa is preferably Leu, but may be other amino acids including Pro although not Arg or Lys, and Yaa may be Pro. Amino acid amides and methyl esters are also readily hydrolyzed, but rates on arylamides are exceedingly low.. The enzyme catalyses Release of an N-terminal amino acid, preferentially leucine, but not glutamic or aspartic acids.. Functionally, presumably involved in the processing and regular turnover of intracellular proteins. Catalyzes the removal of unsubstituted N-terminal amino acids from various peptides. This Histophilus somni (strain 129Pt) (Haemophilus somnus) protein is Probable cytosol aminopeptidase.